The chain runs to 358 residues: Membrane-bound lytic murein transglycosylase C (358 aa).

An N-terminal signal peptide occupies residues 1 to 16 (MKKILALLVIAPLLVS). Cys17 is lipidated: N-palmitoyl cysteine. A lipid anchor (S-diacylglycerol cysteine) is attached at Cys17.

The protein belongs to the transglycosylase Slt family.

Its subcellular location is the cell outer membrane. It catalyses the reaction Exolytic cleavage of the (1-&gt;4)-beta-glycosidic linkage between N-acetylmuramic acid (MurNAc) and N-acetylglucosamine (GlcNAc) residues in peptidoglycan, from either the reducing or the non-reducing ends of the peptidoglycan chains, with concomitant formation of a 1,6-anhydrobond in the MurNAc residue.. Functionally, murein-degrading enzyme. May play a role in recycling of muropeptides during cell elongation and/or cell division. The polypeptide is Membrane-bound lytic murein transglycosylase C (Yersinia pseudotuberculosis serotype O:1b (strain IP 31758)).